The chain runs to 383 residues: Glucose-1-phosphate adenylyltransferase (383 aa).

Alpha-D-glucose 1-phosphate is bound by residues tyrosine 99, glycine 164, 179–180 (EK), and serine 190.

The protein belongs to the bacterial/plant glucose-1-phosphate adenylyltransferase family. In terms of assembly, homotetramer.

The enzyme catalyses alpha-D-glucose 1-phosphate + ATP + H(+) = ADP-alpha-D-glucose + diphosphate. It participates in glycan biosynthesis; glycogen biosynthesis. In terms of biological role, involved in the biosynthesis of ADP-glucose, a building block required for the elongation reactions to produce glycogen. Catalyzes the reaction between ATP and alpha-D-glucose 1-phosphate (G1P) to produce pyrophosphate and ADP-Glc. This Halalkalibacterium halodurans (strain ATCC BAA-125 / DSM 18197 / FERM 7344 / JCM 9153 / C-125) (Bacillus halodurans) protein is Glucose-1-phosphate adenylyltransferase.